The primary structure comprises 63 residues: Large ribosomal subunit protein uL29 (63 aa).

It belongs to the universal ribosomal protein uL29 family.

The protein is Large ribosomal subunit protein uL29 of Pseudoalteromonas atlantica (strain T6c / ATCC BAA-1087).